A 36-amino-acid polypeptide reads, in one-letter code: Avenin-A (36 aa).

This sequence belongs to the gliadin/glutenin family. Monomer.

The protein resides in the vacuole. It is found in the aleurone grain. In terms of biological role, seed storage protein. Serves as a source of nitrogen, carbon, and sulfur for the young developing seedling. This Avena sativa (Oat) protein is Avenin-A.